The chain runs to 102 residues: Synaptobrevin-like protein 5 (102 aa).

The v-SNARE coiled-coil homology domain occupies 17-77 (KIMRTRRELD…VKIKREMSWK (61 aa)).

This chain is Synaptobrevin-like protein 5 (snb-5), found in Caenorhabditis elegans.